The following is a 138-amino-acid chain: Nucleoside diphosphate kinase (138 aa).

Lys-9, Phe-57, Arg-85, Thr-91, Arg-102, and Asn-112 together coordinate ATP. His-115 (pros-phosphohistidine intermediate) is an active-site residue.

The protein belongs to the NDK family. Homotetramer. Requires Mg(2+) as cofactor.

The protein localises to the cytoplasm. It carries out the reaction a 2'-deoxyribonucleoside 5'-diphosphate + ATP = a 2'-deoxyribonucleoside 5'-triphosphate + ADP. The catalysed reaction is a ribonucleoside 5'-diphosphate + ATP = a ribonucleoside 5'-triphosphate + ADP. In terms of biological role, major role in the synthesis of nucleoside triphosphates other than ATP. The ATP gamma phosphate is transferred to the NDP beta phosphate via a ping-pong mechanism, using a phosphorylated active-site intermediate. This chain is Nucleoside diphosphate kinase, found in Desulforapulum autotrophicum (strain ATCC 43914 / DSM 3382 / VKM B-1955 / HRM2) (Desulfobacterium autotrophicum).